A 442-amino-acid chain; its full sequence is tRNA modification GTPase MnmE (442 aa).

Arginine 22, glutamate 79, and lysine 119 together coordinate (6S)-5-formyl-5,6,7,8-tetrahydrofolate. The 151-residue stretch at 216-366 folds into the TrmE-type G domain; it reads GIKTCLVGAP…LLEKIKSIFA (151 aa). Asparagine 226 contacts K(+). Residues 226–231, 245–251, and 270–273 contribute to the GTP site; these read NSGKSS, SEIPGTT, and DTAG. A Mg(2+)-binding site is contributed by serine 230. The K(+) site is built by serine 245, isoleucine 247, and threonine 250. Threonine 251 serves as a coordination point for Mg(2+). Lysine 442 is a (6S)-5-formyl-5,6,7,8-tetrahydrofolate binding site.

Belongs to the TRAFAC class TrmE-Era-EngA-EngB-Septin-like GTPase superfamily. TrmE GTPase family. Homodimer. Heterotetramer of two MnmE and two MnmG subunits. It depends on K(+) as a cofactor.

Its subcellular location is the cytoplasm. Exhibits a very high intrinsic GTPase hydrolysis rate. Involved in the addition of a carboxymethylaminomethyl (cmnm) group at the wobble position (U34) of certain tRNAs, forming tRNA-cmnm(5)s(2)U34. The sequence is that of tRNA modification GTPase MnmE from Mesomycoplasma hyopneumoniae (strain J / ATCC 25934 / NCTC 10110) (Mycoplasma hyopneumoniae).